Consider the following 81-residue polypeptide: Small ribosomal subunit protein bS18 (81 aa).

The protein belongs to the bacterial ribosomal protein bS18 family. As to quaternary structure, part of the 30S ribosomal subunit. Forms a tight heterodimer with protein bS6.

In terms of biological role, binds as a heterodimer with protein bS6 to the central domain of the 16S rRNA, where it helps stabilize the platform of the 30S subunit. This chain is Small ribosomal subunit protein bS18, found in Leptospira borgpetersenii serovar Hardjo-bovis (strain JB197).